The primary structure comprises 418 residues: Probable cysteine desulfurase 2 (418 aa).

Lys234 is subject to N6-(pyridoxal phosphate)lysine. Residue Cys374 is the Cysteine persulfide intermediate of the active site.

The protein belongs to the class-V pyridoxal-phosphate-dependent aminotransferase family. Csd subfamily. Requires pyridoxal 5'-phosphate as cofactor.

The enzyme catalyses (sulfur carrier)-H + L-cysteine = (sulfur carrier)-SH + L-alanine. Functionally, catalyzes the removal of elemental sulfur and selenium atoms from L-cysteine, L-cystine, L-selenocysteine, and L-selenocystine to produce L-alanine. The polypeptide is Probable cysteine desulfurase 2 (csd2) (Mycobacterium leprae (strain TN)).